We begin with the raw amino-acid sequence, 615 residues long: TANK-binding kinase 1-binding protein 1 (615 aa).

Residues 1–279 are homodimerization; it reads MESMFEDDIS…QDLASNQSER (279 aa). Residues 48–162 are a coiled coil; that stretch reads YGDIKERLGG…ALVETHLRQI (115 aa). Ser-184 carries the phosphoserine modification. Residues 221–276 are a coiled coil; that stretch reads VSDLERRRLEEALEAAQGEARGAQLREEQLQAECERLQGELKQLQETRAQDLASNQ. Residues 280 to 329 are interaction with TBK1 and IKBKE; that stretch reads DMAWVKRVGDDQVNLALAYTELTEELGRLRELSSLQGRILRTLLQEQARS. A disordered region spans residues 326 to 458; that stretch reads QARSGGQRHS…SHHVKAGFQG (133 aa). Residues 345-365 show a composition bias toward pro residues; the sequence is PQCPSPSPPARAAPPCPPCQS. Phosphoserine is present on residues Ser-365, Ser-372, Ser-379, Ser-385, Ser-400, and Ser-415. The span at 389–406 shows a compositional bias: pro residues; sequence PSCPSPVPQRRSPVPPSC. A compositionally biased stretch (pro residues) spans 416–435; it reads PVPPSCPAPQPRPPPPPPPG. Phosphoserine is present on residues Ser-504 and Ser-534. The UBZ1-type zinc finger occupies 583 to 609; sequence IRSCPLCQLGFPVGYPDDALIKHIDSH. Positions 586, 589, 605, and 609 each coordinate Zn(2+).

Homodimer. May form a heterodimer with NAP1. Interacts with TKB1 and IKBKE. Weakly interacts with DDX3X. As to quaternary structure, (Microbial infection) Interacts with vaccinia virus protein C6. In terms of tissue distribution, detected in leukocytes, lung, placenta, small intestine, liver, kidney, spleen, muscle, heart, brain and at low levels in thymus.

Its function is as follows. Adapter protein which constitutively binds TBK1 and IKBKE playing a role in antiviral innate immunity. The polypeptide is TANK-binding kinase 1-binding protein 1 (Homo sapiens (Human)).